We begin with the raw amino-acid sequence, 177 residues long: MPIKSRIRAIPDYPKKGIMFRDITTLIKDPVGFRLVIDNLTQRYLENGVDFDVIVGIEARGFIIGSALAYALGKGFVPVRKPGKLPADTVSQEYALEYGTDKIEIHIDALEKGARVLLVDDLLATGGTALAAAPLIEKVGGVVSEMAFIVNLPDIGGEEKILAKGYKVFSLTAFEGE.

The protein belongs to the purine/pyrimidine phosphoribosyltransferase family. In terms of assembly, homodimer.

It is found in the cytoplasm. It catalyses the reaction AMP + diphosphate = 5-phospho-alpha-D-ribose 1-diphosphate + adenine. The protein operates within purine metabolism; AMP biosynthesis via salvage pathway; AMP from adenine: step 1/1. Functionally, catalyzes a salvage reaction resulting in the formation of AMP, that is energically less costly than de novo synthesis. The protein is Adenine phosphoribosyltransferase of Chlorobium luteolum (strain DSM 273 / BCRC 81028 / 2530) (Pelodictyon luteolum).